The sequence spans 633 residues: Threonine--tRNA ligase (633 aa).

Residues 1–143 are editing domain; that stretch reads MRALFLHSNR…SRTIKPKKVK (143 aa). Catalytic regions lie at residues 220–515 and 221–515; these read NPLN…PVLP and PLND…PVLP. 3 residues coordinate Zn(2+): C314, H365, and H488.

This sequence belongs to the class-II aminoacyl-tRNA synthetase family. As to quaternary structure, homodimer. Zn(2+) serves as cofactor.

Its subcellular location is the cytoplasm. The enzyme catalyses tRNA(Thr) + L-threonine + ATP = L-threonyl-tRNA(Thr) + AMP + diphosphate + H(+). In terms of biological role, catalyzes the attachment of threonine to tRNA(Thr) in a two-step reaction: L-threonine is first activated by ATP to form Thr-AMP and then transferred to the acceptor end of tRNA(Thr). Also edits incorrectly charged L-seryl-tRNA(Thr). The protein is Threonine--tRNA ligase of Nanoarchaeum equitans (strain Kin4-M).